A 233-amino-acid chain; its full sequence is DNA repair protein RecO (233 aa).

Belongs to the RecO family.

Functionally, involved in DNA repair and RecF pathway recombination. The chain is DNA repair protein RecO from Pseudomonas aeruginosa (strain LESB58).